A 450-amino-acid polypeptide reads, in one-letter code: tRNA modification GTPase MnmE (450 aa).

Residues Arg23, Glu81, and Lys120 each contribute to the (6S)-5-formyl-5,6,7,8-tetrahydrofolate site. The TrmE-type G domain occupies 216–373; the sequence is GIHLVLAGKP…LLKKIATLAG (158 aa). Residues 226 to 231, 245 to 251, 270 to 273, and 337 to 340 each bind GTP; these read NAGKSS, TPQAGTT, DTAG, and NKAD. Ser230 and Thr251 together coordinate Mg(2+). Lys450 is a binding site for (6S)-5-formyl-5,6,7,8-tetrahydrofolate.

Belongs to the TRAFAC class TrmE-Era-EngA-EngB-Septin-like GTPase superfamily. TrmE GTPase family. In terms of assembly, homodimer. Heterotetramer of two MnmE and two MnmG subunits. It depends on K(+) as a cofactor.

The protein localises to the cytoplasm. Exhibits a very high intrinsic GTPase hydrolysis rate. Involved in the addition of a carboxymethylaminomethyl (cmnm) group at the wobble position (U34) of certain tRNAs, forming tRNA-cmnm(5)s(2)U34. The sequence is that of tRNA modification GTPase MnmE from Dichelobacter nodosus (strain VCS1703A).